The sequence spans 139 residues: MKKSALLNSELSYLVATLGHTDEITICDAGLPIPDGVSRIDLALTHGVPSFIETVRVMLSESQIEGAIVATEFAEVSPELYQALVAELQCEEEKTGKVLSLTHVSHEEFKQRTESSKAVVRTGECTPYANVIFQAGVVF.

The active-site Proton donor is His-20. Substrate-binding positions include Asp-28, His-106, and 128-130 (YAN).

Belongs to the RbsD / FucU family. RbsD subfamily. As to quaternary structure, homodecamer.

The protein resides in the cytoplasm. It catalyses the reaction beta-D-ribopyranose = beta-D-ribofuranose. The protein operates within carbohydrate metabolism; D-ribose degradation; D-ribose 5-phosphate from beta-D-ribopyranose: step 1/2. In terms of biological role, catalyzes the interconversion of beta-pyran and beta-furan forms of D-ribose. The polypeptide is D-ribose pyranase (Vibrio vulnificus (strain CMCP6)).